Reading from the N-terminus, the 409-residue chain is Peptidase T (409 aa).

His-78 provides a ligand contact to Zn(2+). Asp-80 is an active-site residue. Asp-140 lines the Zn(2+) pocket. Glu-173 acts as the Proton acceptor in catalysis. Glu-174, Asp-196, and His-379 together coordinate Zn(2+).

Belongs to the peptidase M20B family. The cofactor is Zn(2+).

The protein resides in the cytoplasm. It catalyses the reaction Release of the N-terminal residue from a tripeptide.. Cleaves the N-terminal amino acid of tripeptides. The polypeptide is Peptidase T (Escherichia coli (strain SE11)).